Here is a 169-residue protein sequence, read N- to C-terminus: E1B protein, small T-antigen (169 aa).

This sequence belongs to the adenoviridae E1B 19 kDa protein family.

In Canine adenovirus serotype 1 (strain CLL) (CAdV-1), this protein is E1B protein, small T-antigen.